Here is an 87-residue protein sequence, read N- to C-terminus: DNA-directed RNA polymerase subunit omega (87 aa).

Belongs to the RNA polymerase subunit omega family. The RNAP catalytic core consists of 2 alpha, 1 beta, 1 beta' and 1 omega subunit. When a sigma factor is associated with the core the holoenzyme is formed, which can initiate transcription.

It catalyses the reaction RNA(n) + a ribonucleoside 5'-triphosphate = RNA(n+1) + diphosphate. Functionally, promotes RNA polymerase assembly. Latches the N- and C-terminal regions of the beta' subunit thereby facilitating its interaction with the beta and alpha subunits. The protein is DNA-directed RNA polymerase subunit omega of Acidothermus cellulolyticus (strain ATCC 43068 / DSM 8971 / 11B).